The sequence spans 87 residues: Candoxin (87 aa).

The first 21 residues, 1-21 (MKTLLLTLVVVTIVCLDLGYT), serve as a signal peptide directing secretion. Intrachain disulfides connect Cys-24–Cys-47, Cys-27–Cys-32, Cys-40–Cys-64, Cys-68–Cys-80, and Cys-81–Cys-86.

As to expression, expressed by the venom gland.

The protein resides in the secreted. Binds and inhibits muscular and neuronal nicotinic acetylcholine receptors (nAChR). Is a reversible antagonist of muscle nAChR (alpha-1-beta-1-delta-epsilon/CHRNA1-CHRNB1-CHRND-CHRNE) (IC(50)=10 nM) and a potent and poorly reversible antagonist of the neuronal alpha-7/CHRNA7 nAChR (IC(50)=50 nM). May exhibit differential affinities for the two binding sites on the muscle nAChR. In Bungarus candidus (Malayan krait), this protein is Candoxin.